A 317-amino-acid polypeptide reads, in one-letter code: Transaldolase (317 aa).

The active-site Schiff-base intermediate with substrate is the Lys132.

It belongs to the transaldolase family. Type 1 subfamily. As to quaternary structure, homodimer.

The protein localises to the cytoplasm. The enzyme catalyses D-sedoheptulose 7-phosphate + D-glyceraldehyde 3-phosphate = D-erythrose 4-phosphate + beta-D-fructose 6-phosphate. The protein operates within carbohydrate degradation; pentose phosphate pathway; D-glyceraldehyde 3-phosphate and beta-D-fructose 6-phosphate from D-ribose 5-phosphate and D-xylulose 5-phosphate (non-oxidative stage): step 2/3. Functionally, transaldolase is important for the balance of metabolites in the pentose-phosphate pathway. The chain is Transaldolase from Haemophilus influenzae (strain PittGG).